Consider the following 283-residue polypeptide: uncharacterized protein (283 aa).

Residues 3 to 79 enclose the HTH rpiR-type domain; sequence TGGLAIIQSM…MRVAGDLAKP (77 aa). Residues 39-58 constitute a DNA-binding region (H-T-H motif); that stretch reads VNEISALANSSDAAVIRLCK. The region spanning 123 to 264 is the SIS domain; that stretch reads AVSLLLKAHT…FLGMAAEQYE (142 aa).

This is an uncharacterized protein from Bacillus subtilis (strain 168).